The sequence spans 295 residues: MDLTEWIVTIIMMIEFLLGNCANFFIMVVNAIDCMKRRKISSADRIITALAISRIGLLWAMLMNWHSRVYTTDTYSFQVTAFSGIIWAITNHFTTWLGTILSMFYLFKIANFSNCLFLHLKRKLDSVLLVIFLVSSLLVFAYLGVVNIKKIAWLSVHEGNVTVKSKLMNIASIRDTLLFSLINIAPFGISLTCVLLLIYSLGKHLKNMKFYGKGCQDQSTMVHIRALQTVVSFLLLYATYSSCVIISGWSIQNVPIFLFCVTIGAFYPAGHSCILIWGNQKLKQFLLLFLRQMKC.

Over 1 to 5 (MDLTE) the chain is Extracellular. A helical transmembrane segment spans residues 6-26 (WIVTIIMMIEFLLGNCANFFI). Residues 27–45 (MVVNAIDCMKRRKISSADR) are Cytoplasmic-facing. Residues 46–66 (IITALAISRIGLLWAMLMNWH) traverse the membrane as a helical segment. Over 67–83 (SRVYTTDTYSFQVTAFS) the chain is Extracellular. A helical membrane pass occupies residues 84–104 (GIIWAITNHFTTWLGTILSMF). Residues 105 to 125 (YLFKIANFSNCLFLHLKRKLD) lie on the Cytoplasmic side of the membrane. A helical membrane pass occupies residues 126–146 (SVLLVIFLVSSLLVFAYLGVV). Topologically, residues 147–177 (NIKKIAWLSVHEGNVTVKSKLMNIASIRDTL) are extracellular. An N-linked (GlcNAc...) asparagine glycan is attached at asparagine 160. The chain crosses the membrane as a helical span at residues 178–198 (LFSLINIAPFGISLTCVLLLI). The Cytoplasmic portion of the chain corresponds to 199–230 (YSLGKHLKNMKFYGKGCQDQSTMVHIRALQTV). A helical transmembrane segment spans residues 231-251 (VSFLLLYATYSSCVIISGWSI). The Extracellular portion of the chain corresponds to 252–255 (QNVP). A helical membrane pass occupies residues 256 to 276 (IFLFCVTIGAFYPAGHSCILI). At 277–295 (WGNQKLKQFLLLFLRQMKC) the chain is on the cytoplasmic side.

The protein belongs to the G-protein coupled receptor T2R family.

The protein resides in the membrane. Functionally, putative taste receptor which may play a role in the perception of bitterness. The protein is Taste receptor type 2 member 120 of Rattus norvegicus (Rat).